We begin with the raw amino-acid sequence, 318 residues long: UDP-N-acetylenolpyruvoylglucosamine reductase (318 aa).

An FAD-binding PCMH-type domain is found at 38–204; it reads IGGICPVVVE…LGIEILLKEG (167 aa). Arg-182 is a catalytic residue. The disordered stretch occupies residues 212-232; it reads SLKDKRDRRNSSQPENKKSAG. The segment covering 213 to 229 has biased composition (basic and acidic residues); the sequence is LKDKRDRRNSSQPENKK. Ser-233 acts as the Proton donor in catalysis. Glu-310 is a catalytic residue.

The protein belongs to the MurB family. FAD serves as cofactor.

The protein localises to the cytoplasm. It carries out the reaction UDP-N-acetyl-alpha-D-muramate + NADP(+) = UDP-N-acetyl-3-O-(1-carboxyvinyl)-alpha-D-glucosamine + NADPH + H(+). It functions in the pathway cell wall biogenesis; peptidoglycan biosynthesis. Cell wall formation. This is UDP-N-acetylenolpyruvoylglucosamine reductase from Leptospira borgpetersenii serovar Hardjo-bovis (strain JB197).